Here is a 313-residue protein sequence, read N- to C-terminus: Coproporphyrin III ferrochelatase (313 aa).

The Fe(2+) site is built by His-191 and Glu-270.

The protein belongs to the ferrochelatase family.

The protein resides in the cytoplasm. It catalyses the reaction Fe-coproporphyrin III + 2 H(+) = coproporphyrin III + Fe(2+). The protein operates within porphyrin-containing compound metabolism; protoheme biosynthesis. Its function is as follows. Involved in coproporphyrin-dependent heme b biosynthesis. Catalyzes the insertion of ferrous iron into coproporphyrin III to form Fe-coproporphyrin III. The polypeptide is Coproporphyrin III ferrochelatase (Enterococcus faecalis (strain ATCC 700802 / V583)).